A 182-amino-acid chain; its full sequence is NADH-quinone oxidoreductase subunit 9 (182 aa).

4Fe-4S ferredoxin-type domains lie at 43 to 73 (LTRHPNGLEKCIGCSLCAAACPAYAIYVEPA) and 89 to 118 (KVYEINMLRCIFCGLCEEACPTGAIVLGYD). [4Fe-4S] cluster is bound by residues Cys53, Cys56, Ser57, Cys59, Cys63, Cys98, Ile99, Cys101, Cys104, and Cys108.

It belongs to the complex I 23 kDa subunit family. In terms of assembly, NDH-1 is composed of 15 different subunits, Nqo1 to Nqo15. The complex has a L-shaped structure, with the hydrophobic arm (subunits Nqo7, Nqo8 and Nqo10 to Nqo14) embedded in the membrane and the hydrophilic peripheral arm (subunits Nqo1 to Nqo6, Nqo9 and Nqo15) protruding into the bacterial cytoplasm. The hydrophilic domain contains all the redox centers. [4Fe-4S] cluster serves as cofactor.

It localises to the cell membrane. The enzyme catalyses a quinone + NADH + 5 H(+)(in) = a quinol + NAD(+) + 4 H(+)(out). In terms of biological role, NDH-1 shuttles electrons from NADH, via FMN and iron-sulfur (Fe-S) centers, to quinones in the respiratory chain. The immediate electron acceptor for the enzyme in this species is menaquinone. Couples the redox reaction to proton translocation (for every two electrons transferred, four hydrogen ions are translocated across the cytoplasmic membrane), and thus conserves the redox energy in a proton gradient required for the synthesis of ATP. The role of the Nqo9 subunit appears to provide a 'connecting chain' of two clusters between cluster N5 and the terminal cluster N2, and to stabilize the structure of the complex by interacting with other subunits. In Thermus thermophilus (strain ATCC 27634 / DSM 579 / HB8), this protein is NADH-quinone oxidoreductase subunit 9 (nqo9).